The sequence spans 224 residues: Peptidyl-prolyl cis-trans isomerase FKBP3 (224 aa).

Ala2 is subject to N-acetylalanine. Ser36 is modified (phosphoserine). Residues 88–118 (VKLSDDKPKDSKSEETLDEGPPKYTKSILKK) form a disordered region. The segment covering 89–102 (KLSDDKPKDSKSEE) has biased composition (basic and acidic residues). Lys99 is subject to N6-acetyllysine. The PPIase FKBP-type domain maps to 128–224 (GDVVHCWYTG…IFEVELVDID (97 aa)). The residue at position 152 (Ser152) is a Phosphoserine. The residue at position 170 (Lys170) is an N6-acetyllysine.

The protein belongs to the FKBP-type PPIase family.

It is found in the nucleus. It catalyses the reaction [protein]-peptidylproline (omega=180) = [protein]-peptidylproline (omega=0). Inhibited preferentially by rapamycin over FK506. Functionally, FK506- and rapamycin-binding proteins (FKBPs) constitute a family of receptors for the two immunosuppressants which inhibit T-cell proliferation by arresting two distinct cytoplasmic signal transmission pathways. PPIases accelerate the folding of proteins. The chain is Peptidyl-prolyl cis-trans isomerase FKBP3 (Fkbp3) from Mus musculus (Mouse).